The chain runs to 448 residues: Maltoporin (448 aa).

Positions 1-25 (MMITLRKLPLAVAVMAGIFAAQASA) are cleaved as a signal peptide.

Belongs to the porin LamB (TC 1.B.3) family. As to quaternary structure, homotrimer formed of three 18-stranded antiparallel beta-barrels, containing three independent channels.

It is found in the cell outer membrane. It catalyses the reaction beta-maltose(in) = beta-maltose(out). Its function is as follows. Involved in the transport of maltose and maltodextrins. In Cronobacter sakazakii (strain ATCC BAA-894) (Enterobacter sakazakii), this protein is Maltoporin.